Consider the following 204-residue polypeptide: High mobility group-T protein (204 aa).

2 consecutive DNA-binding regions (HMG box) follow at residues 8–78 and 94–162; these read PRGK…RSYI and PKRP…TAYR. Residues 162-204 are disordered; sequence RNKGKVPVSMPAKAAAPAKDDDDDDDDDDDDEDDDDDDDEDDE. Residues 181-204 are compositionally biased toward acidic residues; the sequence is DDDDDDDDDDDDEDDDDDDDEDDE.

This sequence belongs to the HMGB family.

The protein resides in the nucleus. It is found in the chromosome. In terms of biological role, binds preferentially single-stranded DNA and unwinds double-stranded DNA. The sequence is that of High mobility group-T protein from Oncorhynchus mykiss (Rainbow trout).